The primary structure comprises 292 residues: tRNA (guanine-N(1)-)-methyltransferase (292 aa).

S-adenosyl-L-methionine is bound by residues Gly151 and 175–180; that span reads IGDYVL.

This sequence belongs to the RNA methyltransferase TrmD family. As to quaternary structure, homodimer.

Its subcellular location is the cytoplasm. It catalyses the reaction guanosine(37) in tRNA + S-adenosyl-L-methionine = N(1)-methylguanosine(37) in tRNA + S-adenosyl-L-homocysteine + H(+). Functionally, specifically methylates guanosine-37 in various tRNAs. The polypeptide is tRNA (guanine-N(1)-)-methyltransferase (Corynebacterium diphtheriae (strain ATCC 700971 / NCTC 13129 / Biotype gravis)).